Here is a 278-residue protein sequence, read N- to C-terminus: DNA-directed RNA polymerase subunit alpha (278 aa).

Belongs to the RNA polymerase alpha chain family. In terms of assembly, in plastids the minimal PEP RNA polymerase catalytic core is composed of four subunits: alpha, beta, beta', and beta''. When a (nuclear-encoded) sigma factor is associated with the core the holoenzyme is formed, which can initiate transcription.

The protein localises to the plastid. It localises to the chloroplast. The enzyme catalyses RNA(n) + a ribonucleoside 5'-triphosphate = RNA(n+1) + diphosphate. Functionally, DNA-dependent RNA polymerase catalyzes the transcription of DNA into RNA using the four ribonucleoside triphosphates as substrates. This is DNA-directed RNA polymerase subunit alpha (rpoA) from Chlorella vulgaris (Green alga).